Here is a 1117-residue protein sequence, read N- to C-terminus: Leucine-rich repeats and immunoglobulin-like domains protein 3 (1117 aa).

The first 24 residues, 1–24 (MGAPGLRAATAALGLLLCAGLGRA), serve as a signal peptide directing secretion. The LRRNT domain occupies 38 to 74 (LLDDDAQRPCPAACHCLGDLLDCSRRRLVRLPDPLPA). LRR repeat units follow at residues 75–98 (WVTR…SHLQ), 99–120 (SLQE…GSIS), 122–143 (NIRQ…QLEA), 146–168 (SLET…PPLQ), 169–189 (LKYL…YFDN), 193–214 (TLLV…MFKL), 216–237 (QLQH…TFQG), 240–261 (ALKS…AFWG), 264–285 (NMEV…WLYG), 288–309 (MLRE…AWEF), 312–333 (KLSE…SFLG), 336–357 (LLNA…AFRG), 360–382 (SLKT…SGAF), 387–408 (RLRQ…AFAG), and 411–432 (TLEH…AFSQ). Residue asparagine 156 is glycosylated (N-linked (GlcNAc...) asparagine). Residue asparagine 274 is glycosylated (N-linked (GlcNAc...) asparagine). Residues asparagine 442 and asparagine 469 are each glycosylated (N-linked (GlcNAc...) asparagine). The LRRCT domain occupies 444–495 (SSLLCDCQLRWLPQWVAENNFQSFVNASCAHPQLLKGRSIFTVSPDGFVCDD). Ig-like C2-type domains follow at residues 499-598 (PQIT…AKLT), 603-692 (PSFT…ATLT), and 697-783 (PSFL…VRLS). Cystine bridges form between cysteine 520–cysteine 581 and cysteine 624–cysteine 676. Residues asparagine 688 and asparagine 729 are each glycosylated (N-linked (GlcNAc...) asparagine). Cysteine 718 and cysteine 767 are joined by a disulfide. Residues 810–830 (VVIIAVVCCVVGTSLVWVVII) traverse the membrane as a helical segment. N-linked (GlcNAc...) asparagine glycosylation is present at asparagine 1014. A disordered region spans residues 1019 to 1093 (DFSTGPEPGS…KERTDFREEN (75 aa)). Residues 1083–1093 (DKERTDFREEN) are compositionally biased toward basic and acidic residues.

Interacts with EGFR, ERBB2 and ERBB4 (in vitro). Widely expressed.

Its subcellular location is the cell membrane. It is found in the cytoplasmic vesicle membrane. Its function is as follows. Plays a role in craniofacial and inner ear morphogenesis during embryonic development. Acts within the otic vesicle epithelium to control formation of the lateral semicircular canal in the inner ear, possibly by restricting the expression of NTN1. The protein is Leucine-rich repeats and immunoglobulin-like domains protein 3 (Lrig3) of Mus musculus (Mouse).